A 551-amino-acid chain; its full sequence is Tetrachloroethene reductive dehalogenase (551 aa).

The segment at residues 1-39 is a signal peptide (tat-type signal); the sequence is MGEINRRNFLKASMLGAAAAAVASASVVKGVVSPLVADA. In terms of domain architecture, 4Fe-4S ferredoxin-type 1 spans 411–440; sequence PRKFGVREFCRLCKKCADACPAQAISHEKD. [4Fe-4S] cluster is bound by residues Cys420, Cys423, Cys426, Cys430, Cys467, Cys478, Cys481, and Cys485. The region spanning 478 to 496 is the 4Fe-4S ferredoxin-type 2 domain; the sequence is CSNCVAVCSWNKVETWNHD.

The protein belongs to the PceA family. The cofactor is [4Fe-4S] cluster. Requires corrinoid as cofactor. Post-translationally, predicted to be exported by the Tat system. The position of the signal peptide cleavage has been experimentally proven.

The protein resides in the cell membrane. It carries out the reaction trichloroethene + chloride + A + H(+) = tetrachloroethene + AH2. The enzyme catalyses trichloroethene + AH2 = (Z)-1,2-dichloroethene + chloride + A + H(+). In terms of biological role, catalyzes the reductive dechlorination of tetrachloroethene (PCE) to trichloroethene (TCE) and of trichloroethene to cis-1,2-dichloroethene (DCE). Reduced methyl viologen can act as the artificial electron donor. The protein is Tetrachloroethene reductive dehalogenase of Desulfitobacterium hafniense (Desulfitobacterium frappieri).